Here is a 168-residue protein sequence, read N- to C-terminus: Peptidyl-Lys metalloendopeptidase (168 aa).

Disulfide bonds link Cys6–Cys76 and Cys78–Cys98. A Zn(2+)-binding site is contributed by His118. Residue Glu119 is part of the active site. The Zn(2+) site is built by His122 and Asp131.

Zn(2+) is required as a cofactor.

The protein resides in the secreted. The catalysed reaction is Preferential cleavage in proteins: -Xaa-|-Lys- (in which Xaa may be Pro).. Inhibited by chelating agents such as EDTA and 1,10-phenanthroline. This Pleurotus ostreatus (Oyster mushroom) protein is Peptidyl-Lys metalloendopeptidase (MEP).